Consider the following 493-residue polypeptide: Glycerol kinase (493 aa).

Residue Thr11 coordinates ADP. 3 residues coordinate ATP: Thr11, Thr12, and Ser13. Thr11 provides a ligand contact to sn-glycerol 3-phosphate. Arg15 is an ADP binding site. Sn-glycerol 3-phosphate-binding residues include Arg80, Glu81, Tyr132, and Asp241. 5 residues coordinate glycerol: Arg80, Glu81, Tyr132, Asp241, and Gln242. Thr263 and Gly306 together coordinate ADP. 4 residues coordinate ATP: Thr263, Gly306, Gln310, and Gly408. Gly408 is a binding site for ADP.

The protein belongs to the FGGY kinase family.

The enzyme catalyses glycerol + ATP = sn-glycerol 3-phosphate + ADP + H(+). It functions in the pathway polyol metabolism; glycerol degradation via glycerol kinase pathway; sn-glycerol 3-phosphate from glycerol: step 1/1. Inhibited by fructose 1,6-bisphosphate (FBP). Key enzyme in the regulation of glycerol uptake and metabolism. Catalyzes the phosphorylation of glycerol to yield sn-glycerol 3-phosphate. This Cereibacter sphaeroides (strain ATCC 17025 / ATH 2.4.3) (Rhodobacter sphaeroides) protein is Glycerol kinase.